The sequence spans 87 residues: Anaphase-promoting complex subunit 11 (87 aa).

Residues 35–77 form an RING-type; atypical zinc finger; it reads CVDCKIPGDDCPPVWGVCNHAFHMHCILKWLNANELQQCPMCR.

This sequence belongs to the RING-box family. The APC/C is composed of at least 13 subunits that stay tightly associated throughout the cell cycle: anapc1, anapc2, anapc3, anapc4, anapc5, anapc6, anapc7, anapc8, anapc10, anapc11, cdc20, cdc26 and cdh1.

The protein resides in the nucleus. It participates in protein modification; protein ubiquitination. Component of the anaphase promoting complex/cyclosome (APC/C), a cell cycle-regulated E3 ubiquitin-protein ligase complex that controls progression through mitosis and the G1 phase of the cell cycle. The polypeptide is Anaphase-promoting complex subunit 11 (anapc11) (Dictyostelium discoideum (Social amoeba)).